The following is a 684-amino-acid chain: MSKFPSEKPVLVTCGLPYANGKAHVGHLRTYVPADIFTRSLKKTGQEVTFVCGSDTHGTPIVFNAEELKTTPTEIIKVYHKHFDEIFKKMGVMLDAFGTTDDPTNHNRTTEIVSKLIENGYVYPKTIEIAYCPSCDRSLPDRYVKGTCPHCKKEARGDECDQGCGKHLEPGELEHPACTTCNGPAEYKQQEHFFFKLSQFKDFLLEYLEGLGGTLNARNYALGWVKQELTDWCITRSLDWGIKFPGHEDLVVYVWVDAPIGYIAFTEEWAEANNESWEKFWKDDGSIIHFIGGDIIYHHCIFWPAMLKGAGYNQPDAVVASGMVKIEDRTFSKSRGYVVWVDEDYLDHGFHQDLLRYYLASYTSHTKELNFSWKVFQDKVNTELVGVFGNFLYRTLLFTHKNFGEIPEGEVKQDILDEINTTIENAKEAMENYEFKKYADTVMALASYGNTYFQSNEPWKLIKENKEACGEIVKNCAQITKALCLLFEPILPEKMEEAWKQIGMETDVHETNYMEATELVKSGTTLEKPSILFEKIEDEKTEEMEAISAARVKEAIAKENGTEEVEEVKEIEEMKDLITFDDFSKLDIRIGTIVSAEAIKKSKKLLKLQVDLGEEETRQIVAGLKESHEPEQLIGKQVAVLTNLAPAKLCGVESNGMVLAGVDAADNAILLQPEKETNPGTCIH.

The 'HIGH' region signature appears at 17-27; it reads PYANGKAHVGH. Zn(2+) is bound by residues Cys-148, Cys-151, Cys-160, and Cys-164. A 'KMSKS' region motif is present at residues 330–334; that stretch reads TFSKS. Residue Lys-333 participates in ATP binding. Residues 582–684 form the tRNA-binding domain; it reads DFSKLDIRIG…KETNPGTCIH (103 aa).

It belongs to the class-I aminoacyl-tRNA synthetase family. MetG type 1 subfamily. As to quaternary structure, homodimer. Requires Zn(2+) as cofactor.

The protein resides in the cytoplasm. The enzyme catalyses tRNA(Met) + L-methionine + ATP = L-methionyl-tRNA(Met) + AMP + diphosphate. In terms of biological role, is required not only for elongation of protein synthesis but also for the initiation of all mRNA translation through initiator tRNA(fMet) aminoacylation. In Methanococcoides burtonii (strain DSM 6242 / NBRC 107633 / OCM 468 / ACE-M), this protein is Methionine--tRNA ligase.